We begin with the raw amino-acid sequence, 280 residues long: 4-hydroxy-3-methylbut-2-enyl diphosphate reductase (280 aa).

Cys12 is a [4Fe-4S] cluster binding site. His40 and His72 together coordinate (2E)-4-hydroxy-3-methylbut-2-enyl diphosphate. Residues His40 and His72 each coordinate dimethylallyl diphosphate. Isopentenyl diphosphate contacts are provided by His40 and His72. Cys94 contacts [4Fe-4S] cluster. A (2E)-4-hydroxy-3-methylbut-2-enyl diphosphate-binding site is contributed by His122. His122 contacts dimethylallyl diphosphate. An isopentenyl diphosphate-binding site is contributed by His122. The active-site Proton donor is the Glu124. (2E)-4-hydroxy-3-methylbut-2-enyl diphosphate is bound at residue Thr160. Cys188 serves as a coordination point for [4Fe-4S] cluster. Residues Ser216, Asn218, and Ser260 each contribute to the (2E)-4-hydroxy-3-methylbut-2-enyl diphosphate site. 3 residues coordinate dimethylallyl diphosphate: Ser216, Asn218, and Ser260. Isopentenyl diphosphate contacts are provided by Ser216, Asn218, and Ser260.

It belongs to the IspH family. The cofactor is [4Fe-4S] cluster.

The catalysed reaction is isopentenyl diphosphate + 2 oxidized [2Fe-2S]-[ferredoxin] + H2O = (2E)-4-hydroxy-3-methylbut-2-enyl diphosphate + 2 reduced [2Fe-2S]-[ferredoxin] + 2 H(+). The enzyme catalyses dimethylallyl diphosphate + 2 oxidized [2Fe-2S]-[ferredoxin] + H2O = (2E)-4-hydroxy-3-methylbut-2-enyl diphosphate + 2 reduced [2Fe-2S]-[ferredoxin] + 2 H(+). It functions in the pathway isoprenoid biosynthesis; dimethylallyl diphosphate biosynthesis; dimethylallyl diphosphate from (2E)-4-hydroxy-3-methylbutenyl diphosphate: step 1/1. Its pathway is isoprenoid biosynthesis; isopentenyl diphosphate biosynthesis via DXP pathway; isopentenyl diphosphate from 1-deoxy-D-xylulose 5-phosphate: step 6/6. Functionally, catalyzes the conversion of 1-hydroxy-2-methyl-2-(E)-butenyl 4-diphosphate (HMBPP) into a mixture of isopentenyl diphosphate (IPP) and dimethylallyl diphosphate (DMAPP). Acts in the terminal step of the DOXP/MEP pathway for isoprenoid precursor biosynthesis. In Trichlorobacter lovleyi (strain ATCC BAA-1151 / DSM 17278 / SZ) (Geobacter lovleyi), this protein is 4-hydroxy-3-methylbut-2-enyl diphosphate reductase.